Reading from the N-terminus, the 144-residue chain is 3-dehydroquinate dehydratase (144 aa).

Tyr22 functions as the Proton acceptor in the catalytic mechanism. Residues Asn73, His79, and Asp86 each coordinate substrate. The active-site Proton donor is His99. Substrate contacts are provided by residues 100–101 (LS) and Arg110.

The protein belongs to the type-II 3-dehydroquinase family. In terms of assembly, homododecamer.

The catalysed reaction is 3-dehydroquinate = 3-dehydroshikimate + H2O. The protein operates within metabolic intermediate biosynthesis; chorismate biosynthesis; chorismate from D-erythrose 4-phosphate and phosphoenolpyruvate: step 3/7. In terms of biological role, catalyzes a trans-dehydration via an enolate intermediate. The chain is 3-dehydroquinate dehydratase from Trichlorobacter lovleyi (strain ATCC BAA-1151 / DSM 17278 / SZ) (Geobacter lovleyi).